The sequence spans 237 residues: Probable Bax inhibitor 1 (237 aa).

The Cytoplasmic segment spans residues 1–29 (MNVFDRNINFDSLFKFSQISHSTQVHLKN). The chain crosses the membrane as a helical span at residues 30-50 (VYSSLAVCMFVAAAGSYVHVV). Residues 51–52 (TR) are Lumenal-facing. The helical transmembrane segment at 53 to 73 (LFQGGMLSVLGSLGMMFWLAM) threads the bilayer. The Cytoplasmic segment spans residues 74 to 86 (TPHNSETEKKRLA). The chain crosses the membrane as a helical span at residues 87 to 107 (ILAGFAFLTGVGLCPTLDFVI). Topologically, residues 108–112 (AINPS) are lumenal. Residues 113–133 (IIVTAFLGTSVIFVCFTLSAL) form a helical membrane-spanning segment. Over 134–139 (YAKRRS) the chain is Cytoplasmic. A helical membrane pass occupies residues 140-160 (YLFLGGTLMSGLSILFLMSMM). Over 161–166 (NMFFGS) the chain is Lumenal. The chain crosses the membrane as a helical span at residues 167-187 (VMLFKAHMYLGLLIMCGFVLX). Residues 188-206 (DTQLIIEKAENGDKDYVWH) are Cytoplasmic-facing. Residues 207–227 (SVDLFLDFITIFRKLMVILAL) constitute an intramembrane region (helical). At 228–237 (NDKDKKKEKK) the chain is on the cytoplasmic side.

It belongs to the BI1 family. Highly abundant in testis.

It localises to the endoplasmic reticulum membrane. Its function is as follows. Suppressor of apoptosis. Modulates unfolded protein response signaling. Modulate ER calcium homeostasis by acting as a calcium-leak channel. This is Probable Bax inhibitor 1 (tmbim6) from Paralichthys olivaceus (Bastard halibut).